The chain runs to 156 residues: Small ribosomal subunit protein uS7 (156 aa).

This sequence belongs to the universal ribosomal protein uS7 family. Part of the 30S ribosomal subunit. Contacts proteins S9 and S11.

Its function is as follows. One of the primary rRNA binding proteins, it binds directly to 16S rRNA where it nucleates assembly of the head domain of the 30S subunit. Is located at the subunit interface close to the decoding center, probably blocks exit of the E-site tRNA. This chain is Small ribosomal subunit protein uS7, found in Rhodospirillum centenum (strain ATCC 51521 / SW).